We begin with the raw amino-acid sequence, 837 residues long: Semaphorin-4B (837 aa).

Residues 1–43 (MLRTAMGLRSWLAAPWGALPPRPPLLLLLLLLLLLQPPPPTWA) form the signal peptide. Residues 44–717 (LSPRISLPLG…WGADRSYWKE (674 aa)) lie on the Extracellular side of the membrane. The 477-residue stretch at 47 to 523 (RISLPLGSEE…SHSGVVQVPM (477 aa)) folds into the Sema domain. N-linked (GlcNAc...) asparagine glycosylation is found at asparagine 69 and asparagine 96. 2 disulfides stabilise this stretch: cysteine 120–cysteine 131 and cysteine 149–cysteine 158. Asparagine 165 is a glycosylation site (N-linked (GlcNAc...) asparagine). Cystine bridges form between cysteine 286-cysteine 399 and cysteine 310-cysteine 359. 2 N-linked (GlcNAc...) asparagine glycosylation sites follow: asparagine 410 and asparagine 525. Residues 525 to 579 (NCSLYRSCGDCLLARDPYCAWSGSSCKHVSLYQPQLATRPWIQDIEGASAKDLCS) enclose the PSI domain. 2 cysteine pairs are disulfide-bonded: cysteine 526–cysteine 543 and cysteine 611–cysteine 656. Residues 604–663 (NTVNTLACPLLSNLATRLWLRNGAPVNASASCHVLPTGDLLLVGTQQLGEFQCWSLEEGF) form the Ig-like C2-type domain. Asparagine 630 is a glycosylation site (N-linked (GlcNAc...) asparagine). Residues 718–738 (FLVMCTLFVLAVLLPVLFLLY) traverse the membrane as a helical segment. Over 739-837 (RHRNSMKVFL…LGSEIRDSVV (99 aa)) the chain is Cytoplasmic. The tract at residues 767 to 805 (PETRPLNGLGPPSTPLDHRGYQSLSDSPPGSRVFTESEK) is disordered. 3 positions are modified to phosphoserine: serine 793, serine 818, and serine 830.

This sequence belongs to the semaphorin family.

It localises to the membrane. Inhibits axonal extension by providing local signals to specify territories inaccessible for growing axons. The chain is Semaphorin-4B from Homo sapiens (Human).